Reading from the N-terminus, the 509-residue chain is UDP-N-acetylmuramyl-tripeptide synthetase (509 aa).

Gly-124–Ser-130 provides a ligand contact to ATP. Residues Thr-164–Thr-165, Ser-191, and Arg-199 each bind UDP-N-acetyl-alpha-D-muramoyl-L-alanyl-D-glutamate. Lys-231 bears the N6-carboxylysine mark.

Belongs to the MurCDEF family. MurE subfamily. Carboxylation is probably crucial for Mg(2+) binding and, consequently, for the gamma-phosphate positioning of ATP.

It localises to the cytoplasm. It participates in cell wall biogenesis; peptidoglycan biosynthesis. Its function is as follows. Catalyzes the addition of an amino acid to the nucleotide precursor UDP-N-acetylmuramoyl-L-alanyl-D-glutamate (UMAG) in the biosynthesis of bacterial cell-wall peptidoglycan. The chain is UDP-N-acetylmuramyl-tripeptide synthetase from Tropheryma whipplei (strain TW08/27) (Whipple's bacillus).